The primary structure comprises 244 residues: Agamous-like MADS-box protein AGL13 (244 aa).

An MADS-box domain is found at 3 to 57 (RGKVEVKRIENKITRQVTFSKRKSGLLKKAYELSVLCDAEVSLIIFSTGGKLYEF). The K-box domain occupies 85-175 (TQGLRQEVTK…KLETEDHDFK (91 aa)).

It is found in the nucleus. Functionally, probable transcription factor. The chain is Agamous-like MADS-box protein AGL13 (AGL13) from Arabidopsis thaliana (Mouse-ear cress).